We begin with the raw amino-acid sequence, 434 residues long: Adenylosuccinate synthetase (434 aa).

GTP-binding positions include Gly25–Lys31 and Gly53–Thr55. Asp26 serves as the catalytic Proton acceptor. Residues Asp26 and Gly53 each coordinate Mg(2+). IMP-binding positions include Asp26–Lys29, Asn51–His54, Thr142, Arg156, Asn233, Thr248, and Arg312. His54 (proton donor) is an active-site residue. Val308 to Arg314 provides a ligand contact to substrate. GTP is bound by residues Arg314, Lys340–Asp342, and Gly422–Gly424.

It belongs to the adenylosuccinate synthetase family. Homodimer. The cofactor is Mg(2+).

Its subcellular location is the cytoplasm. The catalysed reaction is IMP + L-aspartate + GTP = N(6)-(1,2-dicarboxyethyl)-AMP + GDP + phosphate + 2 H(+). It participates in purine metabolism; AMP biosynthesis via de novo pathway; AMP from IMP: step 1/2. In terms of biological role, plays an important role in the de novo pathway and in the salvage pathway of purine nucleotide biosynthesis. Catalyzes the first committed step in the biosynthesis of AMP from IMP. The chain is Adenylosuccinate synthetase from Schizosaccharomyces japonicus (strain yFS275 / FY16936) (Fission yeast).